A 176-amino-acid polypeptide reads, in one-letter code: ATP-dependent protease subunit HslV (176 aa).

Thr-2 is an active-site residue. Na(+)-binding residues include Gly-157, Cys-160, and Thr-163.

It belongs to the peptidase T1B family. HslV subfamily. In terms of assembly, a double ring-shaped homohexamer of HslV is capped on each side by a ring-shaped HslU homohexamer. The assembly of the HslU/HslV complex is dependent on binding of ATP.

It localises to the cytoplasm. It carries out the reaction ATP-dependent cleavage of peptide bonds with broad specificity.. Allosterically activated by HslU binding. Its function is as follows. Protease subunit of a proteasome-like degradation complex believed to be a general protein degrading machinery. This is ATP-dependent protease subunit HslV from Proteus mirabilis (strain HI4320).